The sequence spans 67 residues: Mu-conotoxin TsIIIA (67 aa).

An N-terminal signal peptide occupies residues 1–20 (MMSKLGVLLTICLLLFPLTA). Positions 21-48 (VPLDGDQPADQPAERKQNEQHPLFDQKR) are excised as a propeptide. 3 disulfide bridges follow: C50/C59, C51/C64, and C55/C65.

It belongs to the conotoxin M superfamily. In terms of tissue distribution, expressed by the venom duct.

It localises to the secreted. Mu-conotoxins block voltage-gated sodium channels (Nav). This toxin specifically inhibits mammalian Nav1.8/SCN10A sodium currents (IC(50)=2.11 uM) without inducing a shift in the current-voltage relationship of this channel. In vivo, shows potent analgesic activity in a mice hotplate analgesic assay. In addition, this toxin has better analgesic effects than Ziconotide, an analgesic drug. This Conus tessulatus (Tessellate cone) protein is Mu-conotoxin TsIIIA.